The primary structure comprises 103 residues: Large ribosomal subunit protein bL21 (103 aa).

It belongs to the bacterial ribosomal protein bL21 family. As to quaternary structure, part of the 50S ribosomal subunit. Contacts protein L20.

This protein binds to 23S rRNA in the presence of protein L20. This chain is Large ribosomal subunit protein bL21, found in Yersinia enterocolitica serotype O:8 / biotype 1B (strain NCTC 13174 / 8081).